Consider the following 228-residue polypeptide: Thermonuclease (228 aa).

Positions 1-23 are cleaved as a signal peptide; that stretch reads MTEYLLSAGICMAIVSILLIGMA. Residues 24-60 constitute a propeptide that is removed on maturation; the sequence is ISNVSKGQYAKRFFFFATSCLVLTLVVVSSLSSSANA. The segment covering 58 to 70 has biased composition (polar residues); that stretch reads ANASQTDNGVNRS. The interval 58-83 is disordered; sequence ANASQTDNGVNRSGSEDPTVYSATST. Asp-100 is a binding site for Ca(2+). Residue Arg-114 is part of the active site. 2 residues coordinate Ca(2+): Asp-119 and Thr-120. Catalysis depends on residues Glu-122 and Arg-166.

It belongs to the thermonuclease family. It depends on Ca(2+) as a cofactor.

It is found in the secreted. It catalyses the reaction Endonucleolytic cleavage to nucleoside 3'-phosphates and 3'-phosphooligonucleotide end-products.. Enzyme that catalyzes the hydrolysis of both DNA and RNA at the 5' position of the phosphodiester bond. The protein is Thermonuclease (nuc) of Staphylococcus aureus (strain Mu50 / ATCC 700699).